Here is a 433-residue protein sequence, read N- to C-terminus: Bifunctional urease accessory protein UreEF (433 aa).

The interval 1-200 (MKIANTFIKR…VMATAASTAS (200 aa)) is urease accessory protein UreE. The interval 200-433 (SMTPSLDAGQ…ETQFSRLFRS (234 aa)) is urease accessory protein UreF.

This sequence in the N-terminal section; belongs to the UreE family. The protein in the C-terminal section; belongs to the UreF family. In terms of assembly, ureD, UreF and UreG form a complex that acts as a GTP-hydrolysis-dependent molecular chaperone, activating the urease apoprotein by helping to assemble the nickel containing metallocenter of UreC. The UreE protein probably delivers the nickel.

Its subcellular location is the cytoplasm. Functionally, involved in urease metallocenter assembly. Binds nickel. Probably functions as a nickel donor during metallocenter assembly. Its function is as follows. Required for maturation of urease via the functional incorporation of the urease nickel metallocenter. The sequence is that of Bifunctional urease accessory protein UreEF (ureEF) from Bordetella bronchiseptica (Alcaligenes bronchisepticus).